The primary structure comprises 369 residues: Thyroid hormone receptor beta (369 aa).

The tract at residues 1–14 (MSGYIPSYLDKDEL) is modulating. Zn(2+) contacts are provided by cysteine 15, cysteine 18, cysteine 32, cysteine 35, cysteine 53, cysteine 59, cysteine 69, and cysteine 72. 2 consecutive NR C4-type zinc fingers follow at residues 15-35 (CVVC…CEGC) and 53-77 (CKYE…FKKC). Residues 15 to 89 (CVVCGDKATG…VGMATDLVLD (75 aa)) constitute a DNA-binding region (nuclear receptor). The NR LBD domain occupies 125 to 369 (EEWELIKIVT…PPLFLEVFED (245 aa)). 3,3',5-triiodo-L-thyronine-binding residues include arginine 190, asparagine 239, and histidine 343. L-thyroxine-binding residues include arginine 190, asparagine 239, and histidine 343.

Belongs to the nuclear hormone receptor family. NR1 subfamily.

It is found in the nucleus. Nuclear hormone receptor that can act as a repressor or activator of transcription. High affinity receptor for thyroid hormones, including triiodothyronine and thyroxine. The chain is Thyroid hormone receptor beta (THRB) from Cairina moschata (Muscovy duck).